We begin with the raw amino-acid sequence, 404 residues long: tRNA/tmRNA (uracil-C(5))-methyltransferase (404 aa).

The S-adenosyl-L-methionine site is built by glutamine 218, tyrosine 251, asparagine 256, glutamate 272, and aspartate 332. Catalysis depends on cysteine 358, which acts as the Nucleophile. Glutamate 392 functions as the Proton acceptor in the catalytic mechanism.

The protein belongs to the class I-like SAM-binding methyltransferase superfamily. RNA M5U methyltransferase family. TrmA subfamily.

The enzyme catalyses uridine(54) in tRNA + S-adenosyl-L-methionine = 5-methyluridine(54) in tRNA + S-adenosyl-L-homocysteine + H(+). It carries out the reaction uridine(341) in tmRNA + S-adenosyl-L-methionine = 5-methyluridine(341) in tmRNA + S-adenosyl-L-homocysteine + H(+). Functionally, dual-specificity methyltransferase that catalyzes the formation of 5-methyluridine at position 54 (m5U54) in all tRNAs, and that of position 341 (m5U341) in tmRNA (transfer-mRNA). The protein is tRNA/tmRNA (uracil-C(5))-methyltransferase of Helicobacter hepaticus (strain ATCC 51449 / 3B1).